Consider the following 169-residue polypeptide: Phosphopantetheine adenylyltransferase (169 aa).

Position 14 (threonine 14) interacts with substrate. Residues 14–15 (TF) and histidine 22 each bind ATP. Substrate is bound by residues lysine 46, leucine 78, and arginine 92. Residues 93–95 (GLR), glutamate 103, and 128–134 (HSFISSS) contribute to the ATP site.

Belongs to the bacterial CoaD family. Homohexamer. Requires Mg(2+) as cofactor.

It localises to the cytoplasm. The enzyme catalyses (R)-4'-phosphopantetheine + ATP + H(+) = 3'-dephospho-CoA + diphosphate. Its pathway is cofactor biosynthesis; coenzyme A biosynthesis; CoA from (R)-pantothenate: step 4/5. In terms of biological role, reversibly transfers an adenylyl group from ATP to 4'-phosphopantetheine, yielding dephospho-CoA (dPCoA) and pyrophosphate. The sequence is that of Phosphopantetheine adenylyltransferase from Stenotrophomonas maltophilia (strain K279a).